The primary structure comprises 687 residues: uncharacterized protein (687 aa).

A compositionally biased stretch (low complexity) spans 277–295 (SVCSSQSFSSGQSDISMSS). Disordered regions lie at residues 277–337 (SVCS…QDCD), 342–361 (DTES…SEMP), and 531–564 (HVEQ…PSLI). Residues 300 to 313 (NGSSVGNGSLSPMT) are compositionally biased toward polar residues.

This is an uncharacterized protein from Caenorhabditis elegans.